Reading from the N-terminus, the 375-residue chain is Alcohol dehydrogenase 1A (375 aa).

Serine 2 is modified (N-acetylserine). Serine 23 bears the Phosphoserine mark. Cysteine 47 lines the Zn(2+) pocket. Position 48–52 (48–52 (GTDDH)) interacts with NAD(+). The Zn(2+) site is built by histidine 68, cysteine 98, cysteine 101, cysteine 104, cysteine 112, and cysteine 175. NAD(+) contacts are provided by residues 200 to 205 (GLGGVG), aspartate 224, lysine 229, isoleucine 270, 293 to 295 (VGV), 318 to 320 (AIL), and arginine 370.

This sequence belongs to the zinc-containing alcohol dehydrogenase family. In terms of assembly, dimer of identical or heterodimer of closely related subunits alpha, beta, or gamma that are encoded by genes ADH1A, ADH1B, and ADH1C, respectively. The cofactor is Zn(2+).

The protein localises to the cytoplasm. The catalysed reaction is a primary alcohol + NAD(+) = an aldehyde + NADH + H(+). The enzyme catalyses a secondary alcohol + NAD(+) = a ketone + NADH + H(+). It catalyses the reaction butan-1-ol + NAD(+) = butanal + NADH + H(+). It carries out the reaction 1-propanol + NAD(+) = propanal + NADH + H(+). Functionally, alcohol dehydrogenase. Oxidizes primary as well as secondary alcohols. Ethanol is a very poor substrate. This is Alcohol dehydrogenase 1A (ADH1A) from Homo sapiens (Human).